We begin with the raw amino-acid sequence, 73 residues long: Large ribosomal subunit protein bL31 (73 aa).

Positions 16, 18, 37, and 40 each coordinate Zn(2+).

The protein belongs to the bacterial ribosomal protein bL31 family. Type A subfamily. In terms of assembly, part of the 50S ribosomal subunit. The cofactor is Zn(2+).

Functionally, binds the 23S rRNA. This chain is Large ribosomal subunit protein bL31, found in Pseudomonas fluorescens (strain ATCC BAA-477 / NRRL B-23932 / Pf-5).